The chain runs to 107 residues: Small ribosomal subunit protein uS10c (107 aa).

The protein belongs to the universal ribosomal protein uS10 family. In terms of assembly, part of the 30S ribosomal subunit.

The protein localises to the plastid. Its subcellular location is the chloroplast. Involved in the binding of tRNA to the ribosomes. In Phaeodactylum tricornutum (strain CCAP 1055/1), this protein is Small ribosomal subunit protein uS10c.